The primary structure comprises 468 residues: Intramembrane protease 2 (468 aa).

At 1–22 (MAEAATEIPPTASNVTVFTFEE) the chain is on the lumenal side. Asparagine 14 is a glycosylation site (N-linked (GlcNAc...) asparagine). A helical membrane pass occupies residues 23 to 43 (QATSSLALYGMSILCIIIGSI). The Cytoplasmic portion of the chain corresponds to 44-70 (RSAQYIRTNIDKKRLIEGSITMREARK). A helical membrane pass occupies residues 71-91 (FPISASLVLFGLYLFFKPAAE). Over 92-168 (RFLWVARVFQ…TNLPTIQKAE (77 aa)) the chain is Lumenal. 2 N-linked (GlcNAc...) asparagine glycosylation sites follow: asparagine 114 and asparagine 123. Residues 169–189 (CMQLLTFLICFEGVNAFASLL) traverse the membrane as a helical segment. Over 190-247 (KPFVTAFLKKMPLVPSFLRFNAPYLFSLKKGNKEMEEGDIEDAKKKETEYLFKIDFDR) the chain is Cytoplasmic. Residues 248–265 (YDIIALLMCSPILISHLL) traverse the membrane as a helical segment. Residues 266–267 (KR) lie on the Lumenal side of the membrane. Residues 268 to 284 (HWITNNIIGVSFSILGI) form a helical membrane-spanning segment. Residues 285-296 (ERLHLASFKAGS) are Cytoplasmic-facing. The helical transmembrane segment at 297 to 317 (LLLVGLFFYDIFWVFGTDVMT) threads the bilayer. Aspartate 306 is an active-site residue. Over 318 to 343 (SVAKGIDAPILLQFPQDIYRNGIMEA) the chain is Lumenal. A helical transmembrane segment spans residues 344–364 (SKHSMLGLGDIVIPGIFIALL). Aspartate 353 is a catalytic residue. Topologically, residues 365 to 388 (RRFDYRVVQTTAESKAPQGSLKGR) are cytoplasmic. A helical membrane pass occupies residues 389-409 (YYFVVTVVAYMAGLFITMAVM). Over 410-415 (HHFKAA) the chain is Lumenal. Residues 416–436 (QPALLYLVPCCLFVPLLLAVI) form a helical membrane-spanning segment. The PAL signature appears at 417 to 419 (PAL). Residues 437-468 (RGELSALWNYDESRHVDNEENRKKVDSGKKNN) are Cytoplasmic-facing.

Belongs to the peptidase A22B family.

It localises to the membrane. The protein resides in the endoplasmic reticulum membrane. Acts as intramembrane protease. In larvae, required for the complete shedding of the cuticle during molting, possibly by regulating cholesterol uptake via lrp-1. Involved in embryonic and larval development. The chain is Intramembrane protease 2 from Caenorhabditis elegans.